We begin with the raw amino-acid sequence, 874 residues long: MGACFSVAISCDQAVNNLTSCLSRNQNRFRNLVDHVAALKKTVRQLEARRDDLLKRIKVQEDRGLNLLDEVQQWLSEVESRVCEAHDILSQSDEEIDNLCCGQYCSKRCKYSYDYSKSVINKLQDVENLLSKGVFDEVAQKGPIPKVEERLFHQEIVGQEAIVESTWNSMMEVGVGLLGIYGMGGVGKTTLLSQINNKFRTVSNDFDIAIWVVVSKNPTVKRIQEDIGKRLDLYNEGWEQKTENEIASTIKRSLENKKYMLLLDDMWTKVDLANIGIPVPKRNGSKIAFTSRSNEVCGKMGVDKEIEVTCLMWDDAWDLFTRNMKETLESHPKIPEVAKSIARKCNGLPLALNVIGETMARKKSIEEWHDAVGVFSGIEADILSILKFSYDDLKCEKTKSCFLFSALFPEDYEIGKDDLIEYWVGQGIILGSKGINYKGYTIIGTLTRAYLLKESETKEKVKMHDVVREMALWISSGCGDQKQKNVLVVEANAQLRDIPKIEDQKAVRRMSLIYNQIEEACESLHCPKLETLLLRDNRLRKISREFLSHVPILMVLDLSLNPNLIELPSFSPLYSLRFLNLSCTGITSLPDGLYALRNLLYLNLEHTYMLKRIYEIHDLPNLEVLKLYASGIDITDKLVRQIQAMKHLYLLTITLRNSSGLEIFLGDTRFSSYTEGLTLDEQSYYQSLKVPLATISSSRFLEIQDSHIPKIEIEGSSSNESEIVGPRVRRDISFINLRKVRLDNCTGLKDLTWLVFAPHLATLYVVCLPDIEHIISRSEESRLQKTCELAGVIPFRELEFLTLRNLGQLKSIYRDPLLFGKLKEINIKSCPKLTKLPLDSRSAWKQNVVINAEEEWLQGLQWEDVATKERFFPS.

Residues 22-74 (LSRNQNRFRNLVDHVAALKKTVRQLEARRDDLLKRIKVQEDRGLNLLDEVQQW) are a coiled coil. In terms of domain architecture, NB-ARC spans 139 to 434 (AQKGPIPKVE…GQGIILGSKG (296 aa)). 182 to 189 (GMGGVGKT) contacts ATP. 7 LRR repeats span residues 483–505 (QKNV…EDQK), 506–527 (AVRR…LHCP), 528–548 (KLET…EFLS), 552–574 (ILMV…SPLY), 575–597 (SLRF…YALR), 598–620 (NLLY…HDLP), and 621–642 (NLEV…VRQI).

Belongs to the disease resistance NB-LRR family.

Potential disease resistance protein. This Arabidopsis thaliana (Mouse-ear cress) protein is Putative disease resistance protein At5g05400.